Consider the following 230-residue polypeptide: 7-cyano-7-deazaguanine synthase (230 aa).

Position 9–19 (9–19) interacts with ATP; sequence LSGGLDSATTA. Zn(2+) is bound by residues cysteine 190, cysteine 198, cysteine 201, and cysteine 204.

This sequence belongs to the QueC family. It depends on Zn(2+) as a cofactor.

It catalyses the reaction 7-carboxy-7-deazaguanine + NH4(+) + ATP = 7-cyano-7-deazaguanine + ADP + phosphate + H2O + H(+). The protein operates within purine metabolism; 7-cyano-7-deazaguanine biosynthesis. Catalyzes the ATP-dependent conversion of 7-carboxy-7-deazaguanine (CDG) to 7-cyano-7-deazaguanine (preQ(0)). The chain is 7-cyano-7-deazaguanine synthase from Microcystis aeruginosa (strain NIES-843 / IAM M-2473).